The following is a 424-amino-acid chain: Histidine--tRNA ligase (424 aa).

This sequence belongs to the class-II aminoacyl-tRNA synthetase family. In terms of assembly, homodimer.

The protein resides in the cytoplasm. The catalysed reaction is tRNA(His) + L-histidine + ATP = L-histidyl-tRNA(His) + AMP + diphosphate + H(+). This is Histidine--tRNA ligase from Marinomonas sp. (strain MWYL1).